The sequence spans 251 residues: MLAKRIIPCLDVTGGRVVKGINFEGLRDAGSILEQARFYNNELADELVFLDISASLESRKTTLEEVMKVSGEVFIPLTVGGGINSVERAKDVFLHGADKVSVNTAAVNHPELISRIAEKYGSQAVVVAIDIKKIGSDHMVHTHSGKNPTAYEALEWAHKVQELGAGEILLTSMDRDGTREGYDNDILARVSTSVHIPVIASGGAGNLEHLYEGFTIGHADAALAASIFHFRQYSIRQAKQYLRDRGIEVRL.

Residues Asp-11 and Asp-130 contribute to the active site.

This sequence belongs to the HisA/HisF family. As to quaternary structure, heterodimer of HisH and HisF.

It is found in the cytoplasm. It carries out the reaction 5-[(5-phospho-1-deoxy-D-ribulos-1-ylimino)methylamino]-1-(5-phospho-beta-D-ribosyl)imidazole-4-carboxamide + L-glutamine = D-erythro-1-(imidazol-4-yl)glycerol 3-phosphate + 5-amino-1-(5-phospho-beta-D-ribosyl)imidazole-4-carboxamide + L-glutamate + H(+). It functions in the pathway amino-acid biosynthesis; L-histidine biosynthesis; L-histidine from 5-phospho-alpha-D-ribose 1-diphosphate: step 5/9. IGPS catalyzes the conversion of PRFAR and glutamine to IGP, AICAR and glutamate. The HisF subunit catalyzes the cyclization activity that produces IGP and AICAR from PRFAR using the ammonia provided by the HisH subunit. This is Imidazole glycerol phosphate synthase subunit HisF from Chlorobium phaeobacteroides (strain DSM 266 / SMG 266 / 2430).